Consider the following 377-residue polypeptide: Tryptophan--tRNA ligase, mitochondrial (377 aa).

ATP-binding positions include glutamine 21 and 28–31 (HLGN). A 'HIGH' region motif is present at residues 22-31 (PTSSALHLGN). An L-tryptophan-binding site is contributed by aspartate 181. ATP contacts are provided by residues 193–195 (GED), 242–246 (KMSKS), and lysine 245. The short motif at 242–246 (KMSKS) is the 'KMSKS' region element.

The protein belongs to the class-I aminoacyl-tRNA synthetase family.

Its subcellular location is the mitochondrion matrix. The catalysed reaction is tRNA(Trp) + L-tryptophan + ATP = L-tryptophyl-tRNA(Trp) + AMP + diphosphate + H(+). The sequence is that of Tryptophan--tRNA ligase, mitochondrial (wars2) from Dictyostelium discoideum (Social amoeba).